Reading from the N-terminus, the 511-residue chain is Maturase K (511 aa).

Belongs to the intron maturase 2 family. MatK subfamily.

The protein localises to the plastid. It is found in the chloroplast. Usually encoded in the trnK tRNA gene intron. Probably assists in splicing its own and other chloroplast group II introns. The sequence is that of Maturase K from Avena sativa (Oat).